The chain runs to 217 residues: Probable transaldolase (217 aa).

Lys-84 acts as the Schiff-base intermediate with substrate in catalysis.

This sequence belongs to the transaldolase family. Type 3B subfamily.

The protein resides in the cytoplasm. It catalyses the reaction D-sedoheptulose 7-phosphate + D-glyceraldehyde 3-phosphate = D-erythrose 4-phosphate + beta-D-fructose 6-phosphate. Its pathway is carbohydrate degradation; pentose phosphate pathway; D-glyceraldehyde 3-phosphate and beta-D-fructose 6-phosphate from D-ribose 5-phosphate and D-xylulose 5-phosphate (non-oxidative stage): step 2/3. Transaldolase is important for the balance of metabolites in the pentose-phosphate pathway. This Roseiflexus sp. (strain RS-1) protein is Probable transaldolase.